A 472-amino-acid polypeptide reads, in one-letter code: Siroheme synthase (472 aa).

Positions 1-203 (MNYLPIFIDI…GKIQEAKADL (203 aa)) are precorrin-2 dehydrogenase /sirohydrochlorin ferrochelatase. NAD(+) contacts are provided by residues 22-23 (DI) and 43-44 (KS). Residue S128 is modified to Phosphoserine. Residues 216-472 (GEVYLVGGGP…SSKKSYLFGG (257 aa)) form a uroporphyrinogen-III C-methyltransferase region. An S-adenosyl-L-methionine-binding site is contributed by P225. The active-site Proton acceptor is D248. Catalysis depends on K270, which acts as the Proton donor. Residues 301–303 (GGD), I306, 331–332 (TA), M383, and G412 contribute to the S-adenosyl-L-methionine site.

The protein in the N-terminal section; belongs to the precorrin-2 dehydrogenase / sirohydrochlorin ferrochelatase family. It in the C-terminal section; belongs to the precorrin methyltransferase family.

It carries out the reaction uroporphyrinogen III + 2 S-adenosyl-L-methionine = precorrin-2 + 2 S-adenosyl-L-homocysteine + H(+). The catalysed reaction is precorrin-2 + NAD(+) = sirohydrochlorin + NADH + 2 H(+). The enzyme catalyses siroheme + 2 H(+) = sirohydrochlorin + Fe(2+). Its pathway is cofactor biosynthesis; adenosylcobalamin biosynthesis; precorrin-2 from uroporphyrinogen III: step 1/1. The protein operates within cofactor biosynthesis; adenosylcobalamin biosynthesis; sirohydrochlorin from precorrin-2: step 1/1. It functions in the pathway porphyrin-containing compound metabolism; siroheme biosynthesis; precorrin-2 from uroporphyrinogen III: step 1/1. It participates in porphyrin-containing compound metabolism; siroheme biosynthesis; siroheme from sirohydrochlorin: step 1/1. Its pathway is porphyrin-containing compound metabolism; siroheme biosynthesis; sirohydrochlorin from precorrin-2: step 1/1. Multifunctional enzyme that catalyzes the SAM-dependent methylations of uroporphyrinogen III at position C-2 and C-7 to form precorrin-2 via precorrin-1. Then it catalyzes the NAD-dependent ring dehydrogenation of precorrin-2 to yield sirohydrochlorin. Finally, it catalyzes the ferrochelation of sirohydrochlorin to yield siroheme. The polypeptide is Siroheme synthase (Ruthia magnifica subsp. Calyptogena magnifica).